Reading from the N-terminus, the 233-residue chain is Rab-like protein 3 (233 aa).

The segment at 1 to 233 (MASLDRVKVL…RFNFKSLHSD (233 aa)) is small GTPase-like. Residues 16 to 21 (GVGKSS), 148 to 150 (KFD), and 179 to 180 (DC) contribute to the GTP site.

The protein belongs to the small GTPase superfamily. Rab family. As to quaternary structure, homodimer.

In terms of biological role, required for KRAS signaling regulation and modulation of cell proliferation. Regulator of KRAS prenylation, and probably prenylation of other small GTPases. Required for lymphocyte development and function. Not required for myeloid cell development. This chain is Rab-like protein 3 (rabl3), found in Danio rerio (Zebrafish).